The primary structure comprises 70 residues: Translational regulator CsrA (70 aa).

It belongs to the CsrA/RsmA family. In terms of assembly, homodimer; the beta-strands of each monomer intercalate to form a hydrophobic core, while the alpha-helices form wings that extend away from the core.

The protein resides in the cytoplasm. In terms of biological role, a key translational regulator that binds mRNA to regulate translation initiation and/or mRNA stability. Mediates global changes in gene expression, shifting from rapid growth to stress survival by linking envelope stress, the stringent response and the catabolite repression systems. Usually binds in the 5'-UTR; binding at or near the Shine-Dalgarno sequence prevents ribosome-binding, repressing translation, binding elsewhere in the 5'-UTR can activate translation and/or stabilize the mRNA. Its function is antagonized by small RNA(s). The polypeptide is Translational regulator CsrA (Hydrogenovibrio crunogenus (strain DSM 25203 / XCL-2) (Thiomicrospira crunogena)).